The following is a 415-amino-acid chain: Phosphoribosylamine--glycine ligase (415 aa).

The ATP-grasp domain maps to 108 to 311 (KKIMEKYNIP…LMQHIIDLDE (204 aa)). 134–191 (IENCEFPVVVKKDGLAAGKGVIIADTIEAARSAIEIMYGDEEEGTVVFETFLEGEEFS) is a binding site for ATP. Mg(2+) contacts are provided by glutamate 281 and asparagine 283.

Belongs to the GARS family. It depends on Mg(2+) as a cofactor. The cofactor is Mn(2+).

The enzyme catalyses 5-phospho-beta-D-ribosylamine + glycine + ATP = N(1)-(5-phospho-beta-D-ribosyl)glycinamide + ADP + phosphate + H(+). It functions in the pathway purine metabolism; IMP biosynthesis via de novo pathway; N(1)-(5-phospho-D-ribosyl)glycinamide from 5-phospho-alpha-D-ribose 1-diphosphate: step 2/2. In Staphylococcus aureus (strain MRSA252), this protein is Phosphoribosylamine--glycine ligase.